We begin with the raw amino-acid sequence, 130 residues long: uncharacterized protein (130 aa).

2 stretches are compositionally biased toward polar residues: residues Met1–Gln27 and Gln36–Gly46. Disordered stretches follow at residues Met1–Gly46 and Val103–Leu130. Residues Gln27–Ile51 are a coiled coil.

This sequence belongs to the PDCD5 family.

This is an uncharacterized protein from Caenorhabditis elegans.